The sequence spans 401 residues: Exodeoxyribonuclease 7 large subunit (401 aa).

The protein belongs to the XseA family. Heterooligomer composed of large and small subunits.

Its subcellular location is the cytoplasm. It carries out the reaction Exonucleolytic cleavage in either 5'- to 3'- or 3'- to 5'-direction to yield nucleoside 5'-phosphates.. Bidirectionally degrades single-stranded DNA into large acid-insoluble oligonucleotides, which are then degraded further into small acid-soluble oligonucleotides. This Clostridium botulinum (strain Loch Maree / Type A3) protein is Exodeoxyribonuclease 7 large subunit.